A 160-amino-acid chain; its full sequence is Nucleotide-binding protein VP1617 (160 aa).

This sequence belongs to the YajQ family.

Its function is as follows. Nucleotide-binding protein. This Vibrio parahaemolyticus serotype O3:K6 (strain RIMD 2210633) protein is Nucleotide-binding protein VP1617.